Reading from the N-terminus, the 379-residue chain is Putative zinc metalloprotease BR1156/BS1330_I1152 (379 aa).

H33 contacts Zn(2+). The active site involves E34. H37 is a Zn(2+) binding site. The next 4 membrane-spanning stretches (helical) occupy residues 39 to 61 (LVAR…ELLG), 122 to 144 (VFAG…FALY), 305 to 327 (FDWL…LFPL), and 355 to 377 (IFYR…NDLF). The region spanning 133-208 (TIAIFSVFFA…LNFTVERDGK (76 aa)) is the PDZ domain.

Belongs to the peptidase M50B family. The cofactor is Zn(2+).

The protein localises to the cell inner membrane. This Brucella suis biovar 1 (strain 1330) protein is Putative zinc metalloprotease BR1156/BS1330_I1152.